A 110-amino-acid polypeptide reads, in one-letter code: Acylphosphatase (110 aa).

An Acylphosphatase-like domain is found at 20 to 108 (RAHIFVRGKV…GEFNDFSILP (89 aa)). Active-site residues include R35 and N53.

This sequence belongs to the acylphosphatase family.

It carries out the reaction an acyl phosphate + H2O = a carboxylate + phosphate + H(+). The protein is Acylphosphatase (acyP) of Pyrobaculum calidifontis (strain DSM 21063 / JCM 11548 / VA1).